Reading from the N-terminus, the 287-residue chain is 2-dehydro-3-deoxyphosphooctonate aldolase (287 aa).

The protein belongs to the KdsA family.

It is found in the cytoplasm. The catalysed reaction is D-arabinose 5-phosphate + phosphoenolpyruvate + H2O = 3-deoxy-alpha-D-manno-2-octulosonate-8-phosphate + phosphate. Its pathway is carbohydrate biosynthesis; 3-deoxy-D-manno-octulosonate biosynthesis; 3-deoxy-D-manno-octulosonate from D-ribulose 5-phosphate: step 2/3. The protein operates within bacterial outer membrane biogenesis; lipopolysaccharide biosynthesis. The sequence is that of 2-dehydro-3-deoxyphosphooctonate aldolase from Caulobacter vibrioides (strain ATCC 19089 / CIP 103742 / CB 15) (Caulobacter crescentus).